We begin with the raw amino-acid sequence, 514 residues long: HERV-H LTR-associating protein 1 homolog (514 aa).

The N-terminal stretch at 1–29 (MQSFLLHCPPIRLCMGLACILFLWNAVSG) is a signal peptide. Asn58, Asn97, Asn139, Asn161, Asn179, Asn200, Asn217, Asn232, and Asn321 each carry an N-linked (GlcNAc...) asparagine glycan. The interval 379–420 (LHPTGILTTPSRLAQPSRASGTLMPGTQTTNPTQAPAPRVPQ) is disordered. Over residues 384–398 (ILTTPSRLAQPSRAS) the composition is skewed to polar residues. The segment covering 403-415 (PGTQTTNPTQAPA) has biased composition (low complexity).

The protein localises to the secreted. The chain is HERV-H LTR-associating protein 1 homolog (Hhla1) from Mus musculus (Mouse).